Consider the following 459-residue polypeptide: Probable acetate kinase (459 aa).

N9 contributes to the Mg(2+) binding site. An ATP-binding site is contributed by K16. R100 provides a ligand contact to substrate. D156 functions as the Proton donor/acceptor in the catalytic mechanism. ATP is bound by residues 216–220 (HLGSG) and 299–301 (DFR). The disordered stretch occupies residues 308-338 (TTTSSPTPSPNPNPNPNPDPNPDPNPDPQNQ). A compositionally biased stretch (pro residues) spans 314–334 (TPSPNPNPNPNPDPNPDPNPD). Residue E441 participates in Mg(2+) binding.

This sequence belongs to the acetokinase family. The cofactor is Mg(2+).

It catalyses the reaction acetate + ATP = acetyl phosphate + ADP. It functions in the pathway metabolic intermediate biosynthesis; acetyl-CoA biosynthesis; acetyl-CoA from acetate: step 1/2. The sequence is that of Probable acetate kinase from Chaetomium globosum (strain ATCC 6205 / CBS 148.51 / DSM 1962 / NBRC 6347 / NRRL 1970) (Soil fungus).